Here is a 610-residue protein sequence, read N- to C-terminus: Nuclear factor 7, ovary (610 aa).

One can recognise a Tudor-knot domain in the interval Asn21 to Val75. The disordered stretch occupies residues Pro79–Ala127. Thr104 bears the Phosphothreonine; by CDK1 mark. The segment covering Arg108–Ala127 has biased composition (basic and acidic residues). The RING-type zinc finger occupies Cys146 to Lys186. A B box-type zinc finger spans residues Arg220–Ile261. Positions 225, 228, 247, and 253 each coordinate Zn(2+). Residues Asp295–Ser374 adopt a coiled-coil conformation. One can recognise a B30.2/SPRY domain in the interval Pro415–Gln610.

As to quaternary structure, monomer. In terms of tissue distribution, abundant in oocytes. At the neurula stage, low expression in dorsal embryo region including neural folds and somites.

It is found in the nucleus. Functionally, transcription factor that determines dorsal-ventral body axis. This Xenopus laevis (African clawed frog) protein is Nuclear factor 7, ovary.